The primary structure comprises 586 residues: Axin-like protein pry-1 (586 aa).

Positions 1 to 135 (METHLGWARS…FIEAFNKMSS (135 aa)) are required for interaction with apr-1. The 122-residue stretch at 10 to 131 (SLEAVLSDRS…GSEEFIEAFN (122 aa)) folds into the RGS domain. Disordered stretches follow at residues 137-168 (TADQ…KSAA), 344-442 (MTDD…DSFA), and 478-501 (TSSL…HSKI). 2 stretches are compositionally biased toward polar residues: residues 151–168 (HQNT…KSAA) and 368–388 (GEGS…QLHN). The span at 421–442 (SQSMCAPSYSSASSSYSRDSFA) shows a compositional bias: low complexity. The span at 486–501 (RRQHRKAPTPKKHSKI) shows a compositional bias: basic residues. The region spanning 505–586 (LSNLITISYL…FEGRIAAELR (82 aa)) is the DIX domain.

In terms of assembly, interacts (via N-terminus) with apr-1 (via C-terminus). Interacts with bar-1 (via ARM repeats), gsk-3, and mig-5. As to expression, expressed in hypodermal cells (seam cells) V5 and V6, Q neuroblasts, ventral hypodermal cells P7/8 to P11/12, body wall muscle cells and neurons in the head, the tail and the ventral nerve cord.

The protein localises to the cell membrane. The protein resides in the nucleus. Its subcellular location is the cytoplasm. It is found in the cell cortex. Works in parallel with axl-1 in negatively regulating bar-1 signaling in vulval precursor cells and Q neuroblasts. Inhibits Wnt signaling, which affects tissue specific expression of Hox genes, egl-5, lin-39 and mab-5. This in turn affects QR (postembryonic neuroblast) cell migration, vulval cell fate specification, and the development of sensory structures by the seam cell lineage. Has a role in alae V cell patterning, ray formation in the male tail and axon guidance. Does not affect B cell polarity. The chain is Axin-like protein pry-1 from Caenorhabditis elegans.